The primary structure comprises 254 residues: Homeobox protein BarH-like 1 (254 aa).

The interval 1 to 20 (MQRPGEPGAARFGPPEGCAD) is disordered. Positions 142–201 (GRRSRTVFTELQLMGLEKRFEKQKYLSTPDRIDLAESLGLSQLQVKTWYQNRRMKWKKIV) form a DNA-binding region, homeobox. The tract at residues 204–254 (GGGLESPTKPKGRPKKNSIPTSEQLTEQERAKDAEKPAEVPGEPSDRSRED) is disordered. The segment covering 230 to 254 (EQERAKDAEKPAEVPGEPSDRSRED) has biased composition (basic and acidic residues).

This sequence belongs to the BAR homeobox family. In terms of tissue distribution, widely expressed. Expressed at higher levels in testis and heart. Detected in craniofacial tissue and adult iris, but not in lymphocytes, fibroblasts, choroid retina, retinal pigment epithelium, kidney, or fetal liver.

Its subcellular location is the nucleus. Transcription factor, which is involved in craniofacial development, in odontogenesis and in stomach organogenesis. May have a role in the differentiation of molars from incisors. Plays a role in suppressing endodermal Wnt activity. Binds to a regulatory module of the NCAM promoter. The chain is Homeobox protein BarH-like 1 (BARX1) from Homo sapiens (Human).